The primary structure comprises 340 residues: NADH-quinone oxidoreductase subunit H (340 aa).

9 helical membrane-spanning segments follow: residues 3-23 (LVGM…LVYM), 69-89 (WAFF…WAVI), 102-122 (VVVM…VLAI), 127-147 (VYGI…LGAI), 154-174 (ISYE…AGSL), 186-206 (MPYW…VSML), 248-268 (ILVS…PLNI), 274-294 (IPGF…FIWV), and 312-332 (KVFL…LLWV).

Belongs to the complex I subunit 1 family. NDH-1 is composed of 14 different subunits. Subunits NuoA, H, J, K, L, M, N constitute the membrane sector of the complex.

It localises to the cell inner membrane. The enzyme catalyses a quinone + NADH + 5 H(+)(in) = a quinol + NAD(+) + 4 H(+)(out). NDH-1 shuttles electrons from NADH, via FMN and iron-sulfur (Fe-S) centers, to quinones in the respiratory chain. The immediate electron acceptor for the enzyme in this species is believed to be ubiquinone. Couples the redox reaction to proton translocation (for every two electrons transferred, four hydrogen ions are translocated across the cytoplasmic membrane), and thus conserves the redox energy in a proton gradient. This subunit may bind ubiquinone. This is NADH-quinone oxidoreductase subunit H from Anaplasma phagocytophilum (strain HZ).